The chain runs to 186 residues: Pyridoxal 5'-phosphate synthase subunit PdxT (186 aa).

Residue 47 to 49 (GES) coordinates L-glutamine. Cys-76 functions as the Nucleophile in the catalytic mechanism. Residues Arg-102 and 130-131 (IR) contribute to the L-glutamine site. Catalysis depends on charge relay system residues His-166 and Glu-168.

It belongs to the glutaminase PdxT/SNO family. In the presence of PdxS, forms a dodecamer of heterodimers. Only shows activity in the heterodimer.

It carries out the reaction aldehydo-D-ribose 5-phosphate + D-glyceraldehyde 3-phosphate + L-glutamine = pyridoxal 5'-phosphate + L-glutamate + phosphate + 3 H2O + H(+). The enzyme catalyses L-glutamine + H2O = L-glutamate + NH4(+). The protein operates within cofactor biosynthesis; pyridoxal 5'-phosphate biosynthesis. Its function is as follows. Catalyzes the hydrolysis of glutamine to glutamate and ammonia as part of the biosynthesis of pyridoxal 5'-phosphate. The resulting ammonia molecule is channeled to the active site of PdxS. The sequence is that of Pyridoxal 5'-phosphate synthase subunit PdxT from Staphylococcus epidermidis (strain ATCC 35984 / DSM 28319 / BCRC 17069 / CCUG 31568 / BM 3577 / RP62A).